The following is a 311-amino-acid chain: Large ribosomal subunit protein uL22 (311 aa).

This sequence belongs to the universal ribosomal protein uL22 family. Part of the 50S ribosomal subunit.

Functionally, this protein binds specifically to 23S rRNA; its binding is stimulated by other ribosomal proteins, e.g. L4, L17, and L20. It is important during the early stages of 50S assembly. It makes multiple contacts with different domains of the 23S rRNA in the assembled 50S subunit and ribosome. The globular domain of the protein is located near the polypeptide exit tunnel on the outside of the subunit, while an extended beta-hairpin is found that lines the wall of the exit tunnel in the center of the 70S ribosome. The sequence is that of Large ribosomal subunit protein uL22 (rplV) from Ureaplasma parvum serovar 3 (strain ATCC 27815 / 27 / NCTC 11736).